We begin with the raw amino-acid sequence, 463 residues long: Glutamate--tRNA ligase 1 (463 aa).

Positions 10–20 match the 'HIGH' region motif; that stretch reads PSPTGYLHIGG. The 'KMSKS' region signature appears at 238-242; that stretch reads KLSKR. ATP is bound at residue lysine 241.

It belongs to the class-I aminoacyl-tRNA synthetase family. Glutamate--tRNA ligase type 1 subfamily. In terms of assembly, monomer.

It localises to the cytoplasm. The catalysed reaction is tRNA(Glu) + L-glutamate + ATP = L-glutamyl-tRNA(Glu) + AMP + diphosphate. In terms of biological role, catalyzes the attachment of glutamate to tRNA(Glu) in a two-step reaction: glutamate is first activated by ATP to form Glu-AMP and then transferred to the acceptor end of tRNA(Glu). The polypeptide is Glutamate--tRNA ligase 1 (Helicobacter pylori (strain J99 / ATCC 700824) (Campylobacter pylori J99)).